Consider the following 475-residue polypeptide: Trigger factor (475 aa).

The PPIase FKBP-type domain occupies 165–250 (GDRVTIDYLG…VKAVFRPDEL (86 aa)). Positions 439 to 466 (EYDETDVPEEKPAKKKSAVKEKSAEKTS) are enriched in basic and acidic residues. The disordered stretch occupies residues 439–475 (EYDETDVPEEKPAKKKSAVKEKSAEKTSAKKKAPKKA).

This sequence belongs to the FKBP-type PPIase family. Tig subfamily.

It localises to the cytoplasm. The enzyme catalyses [protein]-peptidylproline (omega=180) = [protein]-peptidylproline (omega=0). Involved in protein export. Acts as a chaperone by maintaining the newly synthesized protein in an open conformation. Functions as a peptidyl-prolyl cis-trans isomerase. This is Trigger factor from Bartonella tribocorum (strain CIP 105476 / IBS 506).